The following is a 563-amino-acid chain: Arginine--tRNA ligase (563 aa).

A 'HIGH' region motif is present at residues 121–131 (PNIAKPFSIGH).

Belongs to the class-I aminoacyl-tRNA synthetase family. Monomer.

The protein localises to the cytoplasm. It catalyses the reaction tRNA(Arg) + L-arginine + ATP = L-arginyl-tRNA(Arg) + AMP + diphosphate. This is Arginine--tRNA ligase from Streptococcus pneumoniae (strain CGSP14).